A 163-amino-acid polypeptide reads, in one-letter code: Nucleotide-binding protein BcerKBAB4_1061 (163 aa).

Belongs to the YajQ family.

Nucleotide-binding protein. This Bacillus mycoides (strain KBAB4) (Bacillus weihenstephanensis) protein is Nucleotide-binding protein BcerKBAB4_1061.